Reading from the N-terminus, the 299-residue chain is Fibrinogen silencer-binding protein (299 aa).

Lys94 is covalently cross-linked (Glycyl lysine isopeptide (Lys-Gly) (interchain with G-Cter in SUMO2)). Positions 189-211 (EGSESPSLSSVDMRMTSSPSSVP) are disordered. A compositionally biased stretch (polar residues) spans 192–209 (ESPSLSSVDMRMTSSPSS).

As to quaternary structure, interacts with APBA1 (via PDZ 1 and 2 domains).

It is found in the nucleus. Functionally, transcriptional repressor that down-regulates the expression of the fibrinogen gamma chain. Represses transcription of GSK3B gene promoter via its interaction with APBA1. This Mus musculus (Mouse) protein is Fibrinogen silencer-binding protein (Fsbp).